A 407-amino-acid polypeptide reads, in one-letter code: Divalent metal cation transporter MntH (407 aa).

11 consecutive transmembrane segments (helical) span residues 16–36 (LTLLGPAFIAAIGYIDPGNFA), 43–63 (STFGYQLLWVVVWANLMAMLV), 95–115 (WVQAEIIAMATDLAEFIGAAV), 119–139 (LLLGVTLLEGAGITAVVTWGI), 152–172 (FVVGGLLLFVAAAYIVELVFS), 193–213 (AVYLAAGVLGATVMPHVIYLH), 239–259 (IAMTIAGFVNLAMMAMAAAAF), 288–308 (LFGLSLVASGISSTVVGTLAG), 318–338 (FTIPLWLRRAITMAPAFVVIA), 346–366 (ILVLSQVVLSFGIALALIPLL), and 387–407 (VGRLIVALVIGLNAYLLVAMI).

It belongs to the NRAMP family.

The protein resides in the cell inner membrane. H(+)-stimulated, divalent metal cation uptake system. The chain is Divalent metal cation transporter MntH from Aeromonas hydrophila subsp. hydrophila (strain ATCC 7966 / DSM 30187 / BCRC 13018 / CCUG 14551 / JCM 1027 / KCTC 2358 / NCIMB 9240 / NCTC 8049).